A 154-amino-acid polypeptide reads, in one-letter code: Transcriptional repressor NrdR (154 aa).

The segment at Cys-3–Cys-34 is a zinc-finger region. Positions Pro-49 to Asp-139 constitute an ATP-cone domain.

It belongs to the NrdR family. It depends on Zn(2+) as a cofactor.

Negatively regulates transcription of bacterial ribonucleotide reductase nrd genes and operons by binding to NrdR-boxes. The polypeptide is Transcriptional repressor NrdR (Neisseria meningitidis serogroup B (strain ATCC BAA-335 / MC58)).